A 198-amino-acid chain; its full sequence is Ribonuclease HII (198 aa).

An RNase H type-2 domain is found at N11–V198. A divalent metal cation is bound by residues D17, E18, and D109.

Belongs to the RNase HII family. Mn(2+) serves as cofactor. Mg(2+) is required as a cofactor.

It is found in the cytoplasm. It catalyses the reaction Endonucleolytic cleavage to 5'-phosphomonoester.. Its function is as follows. Endonuclease that specifically degrades the RNA of RNA-DNA hybrids. This is Ribonuclease HII from Yersinia enterocolitica serotype O:8 / biotype 1B (strain NCTC 13174 / 8081).